Consider the following 303-residue polypeptide: Aspartate carbamoyltransferase catalytic subunit (303 aa).

The carbamoyl phosphate site is built by R49 and T50. K77 is an L-aspartate binding site. Carbamoyl phosphate is bound by residues R99, H126, and Q129. L-aspartate contacts are provided by R159 and R211. Carbamoyl phosphate is bound by residues S252 and P253.

Belongs to the aspartate/ornithine carbamoyltransferase superfamily. ATCase family. Heterododecamer (2C3:3R2) of six catalytic PyrB chains organized as two trimers (C3), and six regulatory PyrI chains organized as three dimers (R2).

It catalyses the reaction carbamoyl phosphate + L-aspartate = N-carbamoyl-L-aspartate + phosphate + H(+). Its pathway is pyrimidine metabolism; UMP biosynthesis via de novo pathway; (S)-dihydroorotate from bicarbonate: step 2/3. Its function is as follows. Catalyzes the condensation of carbamoyl phosphate and aspartate to form carbamoyl aspartate and inorganic phosphate, the committed step in the de novo pyrimidine nucleotide biosynthesis pathway. This Listeria monocytogenes serovar 1/2a (strain ATCC BAA-679 / EGD-e) protein is Aspartate carbamoyltransferase catalytic subunit.